A 464-amino-acid chain; its full sequence is Argininosuccinate lyase (464 aa).

This sequence belongs to the lyase 1 family. Argininosuccinate lyase subfamily.

It localises to the cytoplasm. It catalyses the reaction 2-(N(omega)-L-arginino)succinate = fumarate + L-arginine. It participates in amino-acid biosynthesis; L-arginine biosynthesis; L-arginine from L-ornithine and carbamoyl phosphate: step 3/3. In Pseudomonas aeruginosa (strain UCBPP-PA14), this protein is Argininosuccinate lyase.